A 571-amino-acid polypeptide reads, in one-letter code: Pectinesterase/pectinesterase inhibitor (571 aa).

The pectinesterase inhibitor stretch occupies residues 27-178; sequence NSHQKAVESL…KILSSNAIDI (152 aa). Residues 233 to 254 are disordered; the sequence is AQAGRPGAPADEGIGEGGGGGG. A pectinesterase region spans residues 259-558; that stretch reads THVVAKDGSG…TVANWLTPAN (300 aa). Substrate-binding residues include Thr336 and Gln366. Catalysis depends on Asp389, which acts as the Proton donor; for pectinesterase activity. Asp410 (nucleophile; for pectinesterase activity) is an active-site residue. Positions 479 and 481 each coordinate substrate.

This sequence in the N-terminal section; belongs to the PMEI family. The protein in the C-terminal section; belongs to the pectinesterase family.

It localises to the secreted. The protein resides in the cell wall. The catalysed reaction is [(1-&gt;4)-alpha-D-galacturonosyl methyl ester](n) + n H2O = [(1-&gt;4)-alpha-D-galacturonosyl](n) + n methanol + n H(+). Its pathway is glycan metabolism; pectin degradation; 2-dehydro-3-deoxy-D-gluconate from pectin: step 1/5. In terms of biological role, acts in the modification of cell walls via demethylesterification of cell wall pectin. The polypeptide is Pectinesterase/pectinesterase inhibitor (Brassica campestris (Field mustard)).